The sequence spans 177 residues: Coatomer subunit zeta-1 (177 aa).

Belongs to the adaptor complexes small subunit family. Oligomeric complex that consists of at least the alpha, beta, beta', gamma, delta, epsilon and zeta subunits.

It localises to the cytoplasm. The protein localises to the golgi apparatus membrane. It is found in the cytoplasmic vesicle. The protein resides in the COPI-coated vesicle membrane. Its function is as follows. The coatomer is a cytosolic protein complex that binds to dilysine motifs and reversibly associates with Golgi non-clathrin-coated vesicles, which further mediate biosynthetic protein transport from the ER, via the Golgi up to the trans Golgi network. Coatomer complex is required for budding from Golgi membranes, and is essential for the retrograde Golgi-to-ER transport of dilysine-tagged proteins. The zeta subunit may be involved in regulating the coat assembly and, hence, the rate of biosynthetic protein transport due to its association-dissociation properties with the coatomer complex. The sequence is that of Coatomer subunit zeta-1 from Arabidopsis thaliana (Mouse-ear cress).